Reading from the N-terminus, the 87-residue chain is Retinal rod rhodopsin-sensitive cGMP 3',5'-cyclic phosphodiesterase subunit gamma (87 aa).

Met1 is modified (N-acetylmethionine). The segment at 16–54 (VVGGPVTPRKGPPKFKQRQTRQFKSKPPKKGVQGFGDDI) is disordered. A compositionally biased stretch (basic residues) spans 26-44 (GPPKFKQRQTRQFKSKPPK).

The protein belongs to the rod/cone cGMP-PDE gamma subunit family. Oligomer composed of two catalytic chains (alpha and beta), an inhibitory chain (gamma) and the delta chain.

The enzyme catalyses 3',5'-cyclic GMP + H2O = GMP + H(+). In terms of biological role, participates in processes of transmission and amplification of the visual signal. cGMP-PDEs are the effector molecules in G-protein-mediated phototransduction in vertebrate rods and cones. This is Retinal rod rhodopsin-sensitive cGMP 3',5'-cyclic phosphodiesterase subunit gamma (PDE6G) from Cavia porcellus (Guinea pig).